Consider the following 179-residue polypeptide: Isopentenyl-diphosphate Delta-isomerase (179 aa).

Mn(2+) is bound by residues His24 and His30. Residues 28 to 160 form the Nudix hydrolase domain; that stretch reads LLHRAFSIFI…PEKFTVWFLT (133 aa). The active site involves Cys65. Residue His67 participates in Mn(2+) binding. A Mg(2+)-binding site is contributed by Glu85. Mn(2+) is bound by residues Glu110 and Glu112. Residue Glu112 is part of the active site.

Belongs to the IPP isomerase type 1 family. Homodimer. Requires Mg(2+) as cofactor. The cofactor is Mn(2+).

The protein resides in the cytoplasm. It catalyses the reaction isopentenyl diphosphate = dimethylallyl diphosphate. It functions in the pathway isoprenoid biosynthesis; dimethylallyl diphosphate biosynthesis; dimethylallyl diphosphate from isopentenyl diphosphate: step 1/1. Catalyzes the 1,3-allylic rearrangement of the homoallylic substrate isopentenyl (IPP) to its highly electrophilic allylic isomer, dimethylallyl diphosphate (DMAPP). This chain is Isopentenyl-diphosphate Delta-isomerase, found in Serratia proteamaculans (strain 568).